The chain runs to 546 residues: Membrane protein insertase YidC (546 aa).

A helical transmembrane segment spans residues 6–26 (LILFIVFSFSLLLLWEAWQDK). The segment at 31 to 56 (PATRPVAGAPAGSAAPTPSTALNAPA) is disordered. Positions 37-56 (AGAPAGSAAPTPSTALNAPA) are enriched in low complexity. Helical transmembrane passes span 351-371 (LVGN…LALY), 425-445 (LPIL…LAAV), 465-482 (WYIL…QVKL), and 494-514 (IMMI…AGLV).

This sequence belongs to the OXA1/ALB3/YidC family. Type 1 subfamily. In terms of assembly, interacts with the Sec translocase complex via SecD. Specifically interacts with transmembrane segments of nascent integral membrane proteins during membrane integration.

Its subcellular location is the cell inner membrane. Required for the insertion and/or proper folding and/or complex formation of integral membrane proteins into the membrane. Involved in integration of membrane proteins that insert both dependently and independently of the Sec translocase complex, as well as at least some lipoproteins. Aids folding of multispanning membrane proteins. The protein is Membrane protein insertase YidC of Thiobacillus denitrificans (strain ATCC 25259 / T1).